The following is a 320-amino-acid chain: HPr kinase/phosphorylase (320 aa).

Residues His-141 and Lys-162 contribute to the active site. 156–163 is a binding site for ATP; that stretch reads GHSGLGKS. Residue Ser-163 coordinates Mg(2+). Asp-180 serves as the catalytic Proton acceptor; for phosphorylation activity. Proton donor; for dephosphorylation activity. The segment at 204 to 213 is important for the catalytic mechanism of both phosphorylation and dephosphorylation; sequence LEVRGLGILN. Glu-205 is a Mg(2+) binding site. Arg-248 is a catalytic residue. The segment at 269 to 274 is important for the catalytic mechanism of dephosphorylation; that stretch reads PVAVGR.

The protein belongs to the HPrK/P family. As to quaternary structure, homohexamer. Mg(2+) serves as cofactor.

It carries out the reaction [HPr protein]-L-serine + ATP = [HPr protein]-O-phospho-L-serine + ADP + H(+). It catalyses the reaction [HPr protein]-O-phospho-L-serine + phosphate + H(+) = [HPr protein]-L-serine + diphosphate. Catalyzes the ATP- as well as the pyrophosphate-dependent phosphorylation of a specific serine residue in HPr, a phosphocarrier protein of the phosphoenolpyruvate-dependent sugar phosphotransferase system (PTS). HprK/P also catalyzes the pyrophosphate-producing, inorganic phosphate-dependent dephosphorylation (phosphorolysis) of seryl-phosphorylated HPr (P-Ser-HPr). The polypeptide is HPr kinase/phosphorylase (Neisseria meningitidis serogroup B (strain ATCC BAA-335 / MC58)).